The chain runs to 238 residues: MGQKIHPIGFRLGITQDHRSRWYADSDRYPELLQEDHRIRTFINQQLANAGIAEVRIERKADQVELQIRTARPGVVVGKGGQGIEELRKQLRQMLPANRTIKVNVVEVNRVDAEASLLAEYITQQLERRVAFRRAVRQAIQRAQRAGIEGIKVQVAGRLNGAEIARTEWTREGRVPLHTLRADIDYAYRTARTIYGILGVKVWIFKGEVLPGQTEAVPREATRRSPQRRLPQFENRSN.

One can recognise a KH type-2 domain in the interval 39 to 109; it reads IRTFINQQLA…TIKVNVVEVN (71 aa). The interval 215–238 is disordered; that stretch reads EAVPREATRRSPQRRLPQFENRSN.

It belongs to the universal ribosomal protein uS3 family. As to quaternary structure, part of the 30S ribosomal subunit. Forms a tight complex with proteins S10 and S14.

Binds the lower part of the 30S subunit head. Binds mRNA in the 70S ribosome, positioning it for translation. This Thermosynechococcus vestitus (strain NIES-2133 / IAM M-273 / BP-1) protein is Small ribosomal subunit protein uS3.